The chain runs to 82 residues: Protein transport protein Sec61 subunit beta (82 aa).

Residue methionine 1 is modified to N-acetylmethionine. Positions 1–34 are disordered; sequence MVGSGAPQRGSAAATASMRRRKPTSGAGGGGASG. Residues 1-55 are Cytoplasmic-facing; the sequence is MVGSGAPQRGSAAATASMRRRKPTSGAGGGGASGGAAGSMLQFYTDDAPGLKISP. A helical transmembrane segment spans residues 56–76; it reads NVVLIMSIGFIAFVAVLHVMG.

The protein belongs to the SEC61-beta family. In terms of assembly, heterotrimeric complex composed of SEC61-alpha, SEC61-beta and SEC61-gamma.

It is found in the endoplasmic reticulum membrane. Its function is as follows. Necessary for protein translocation in the endoplasmic reticulum. This is Protein transport protein Sec61 subunit beta from Arabidopsis thaliana (Mouse-ear cress).